A 578-amino-acid chain; its full sequence is Triokinase/FMN cyclase (578 aa).

Positions 9–336 (SVEGCADDAL…IDAETTAKAW (328 aa)) constitute a DhaK domain. Dihydroxyacetone contacts are provided by residues 56-59 (GSGH), Lys-109, and Asp-114. His-221 (tele-hemiaminal-histidine intermediate) is an active-site residue. One can recognise a DhaL domain in the interval 372–571 (KQMALVLDRI…AAAIFRAILE (200 aa)). Residues 401-404 (DGDC), 446-447 (SS), Gly-486, and 494-495 (TM) each bind ATP. 2 positions are modified to phosphoserine: Ser-511 and Ser-545. 556-558 (DPG) is an ATP binding site.

It belongs to the dihydroxyacetone kinase (DAK) family. In terms of assembly, homodimer. Interacts with IFIH1 (via the CARD domains), the interaction is inhibited by viral infection. Mg(2+) serves as cofactor. It depends on Mn(2+) as a cofactor. The cofactor is Co(2+).

It carries out the reaction dihydroxyacetone + ATP = dihydroxyacetone phosphate + ADP + H(+). It catalyses the reaction D-glyceraldehyde + ATP = D-glyceraldehyde 3-phosphate + ADP + H(+). The enzyme catalyses FAD = riboflavin cyclic-4',5'-phosphate + AMP + H(+). With respect to regulation, each activity is inhibited by the substrate(s) of the other. In terms of biological role, catalyzes both the phosphorylation of dihydroxyacetone and of glyceraldehyde, and the splitting of ribonucleoside diphosphate-X compounds among which FAD is the best substrate. Represses IFIH1-mediated cellular antiviral response. The chain is Triokinase/FMN cyclase from Mus musculus (Mouse).